The following is a 440-amino-acid chain: Thymidine phosphorylase (440 aa).

The protein belongs to the thymidine/pyrimidine-nucleoside phosphorylase family. As to quaternary structure, homodimer.

It carries out the reaction thymidine + phosphate = 2-deoxy-alpha-D-ribose 1-phosphate + thymine. The protein operates within pyrimidine metabolism; dTMP biosynthesis via salvage pathway; dTMP from thymine: step 1/2. The enzymes which catalyze the reversible phosphorolysis of pyrimidine nucleosides are involved in the degradation of these compounds and in their utilization as carbon and energy sources, or in the rescue of pyrimidine bases for nucleotide synthesis. This is Thymidine phosphorylase from Proteus mirabilis (strain HI4320).